A 463-amino-acid chain; its full sequence is ATP synthase subunit beta (463 aa).

Residue 152–159 (GGAGVGKT) participates in ATP binding.

Belongs to the ATPase alpha/beta chains family. F-type ATPases have 2 components, CF(1) - the catalytic core - and CF(0) - the membrane proton channel. CF(1) has five subunits: alpha(3), beta(3), gamma(1), delta(1), epsilon(1). CF(0) has three main subunits: a(1), b(2) and c(9-12). The alpha and beta chains form an alternating ring which encloses part of the gamma chain. CF(1) is attached to CF(0) by a central stalk formed by the gamma and epsilon chains, while a peripheral stalk is formed by the delta and b chains.

It localises to the cell membrane. It carries out the reaction ATP + H2O + 4 H(+)(in) = ADP + phosphate + 5 H(+)(out). Produces ATP from ADP in the presence of a proton gradient across the membrane. The catalytic sites are hosted primarily by the beta subunits. This Clostridium botulinum (strain Alaska E43 / Type E3) protein is ATP synthase subunit beta.